Here is a 192-residue protein sequence, read N- to C-terminus: Bifunctional protein PyrR (192 aa).

Substrate contacts are provided by residues 49–50 (SG), arginine 90, 111–119 (DDVLFSGRT), arginine 144, and valine 168. Positions 107–119 (VILVDDVLFSGRT) match the PRPP-binding motif.

This sequence belongs to the purine/pyrimidine phosphoribosyltransferase family. PyrR subfamily.

It carries out the reaction UMP + diphosphate = 5-phospho-alpha-D-ribose 1-diphosphate + uracil. Regulates the transcription of the pyrimidine nucleotide (pyr) operon in response to exogenous pyrimidines. In terms of biological role, also displays a weak uracil phosphoribosyltransferase activity which is not physiologically significant. This Corynebacterium glutamicum (strain ATCC 13032 / DSM 20300 / JCM 1318 / BCRC 11384 / CCUG 27702 / LMG 3730 / NBRC 12168 / NCIMB 10025 / NRRL B-2784 / 534) protein is Bifunctional protein PyrR.